Consider the following 953-residue polypeptide: 26S proteasome non-ATPase regulatory subunit 1 (953 aa).

N-acetylmethionine is present on Met1. Position 273 is a phosphothreonine (Thr273). A disordered region spans residues Pro279–Pro318. Residue Ser290 is modified to Phosphoserine. Residues Ser290–Thr303 show a composition bias toward basic and acidic residues. Lys310 is subject to N6-acetyllysine. At Thr311 the chain carries Phosphothreonine. Ser315 is modified (phosphoserine). 10 PC repeats span residues Thr403–Ala436, Gly441–Arg474, Gly476–Glu510, Ala511–Leu545, Gly547–Arg580, Ser581–Arg616, Ala617–Arg649, Gly651–Gln685, Gly686–Ala726, and Gly729–Val761. Lys720 is subject to N6-acetyllysine. Thr830 is modified (phosphothreonine). At Ser834 the chain carries Phosphoserine. Disordered stretches follow at residues Ala839–Pro881 and Ala930–Asp953. Composition is skewed to basic and acidic residues over residues Lys842–Glu852 and Ala859–Glu872. Over residues Glu936–Asp953 the composition is skewed to acidic residues.

The protein belongs to the proteasome subunit S1 family. As to quaternary structure, component of the 19S proteasome regulatory particle complex. The 26S proteasome consists of a 20S core particle (CP) and two 19S regulatory subunits (RP). The regulatory particle is made of a lid composed of 9 subunits, a base containing 6 ATPases and few additional components including PSMD1. Interacts with ADRM1. Interacts with ZFAND1.

Functionally, component of the 26S proteasome, a multiprotein complex involved in the ATP-dependent degradation of ubiquitinated proteins. This complex plays a key role in the maintenance of protein homeostasis by removing misfolded or damaged proteins, which could impair cellular functions, and by removing proteins whose functions are no longer required. Therefore, the proteasome participates in numerous cellular processes, including cell cycle progression, apoptosis, or DNA damage repair. This is 26S proteasome non-ATPase regulatory subunit 1 (PSMD1) from Homo sapiens (Human).